The chain runs to 177 residues: Anti-apoptotic protein NR13 (177 aa).

A BH1 motif is present at residues Leu-75 to Gly-94. The helical transmembrane segment at Leu-86 to Glu-106 threads the bilayer. Residues Glu-126–Phe-141 carry the BH2 motif. Residues Ser-156–Val-176 form a helical membrane-spanning segment.

This sequence belongs to the Bcl-2 family. As to quaternary structure, interacts with BAX. In terms of tissue distribution, mainly expressed in neural and muscular tissues.

The protein resides in the cell membrane. Its function is as follows. Shows anti-apoptotic properties. Counteract the pro-apoptotic activity of BAX. This Coturnix japonica (Japanese quail) protein is Anti-apoptotic protein NR13 (NR13).